Here is a 105-residue protein sequence, read N- to C-terminus: Large ribosomal subunit protein bL21 (105 aa).

This sequence belongs to the bacterial ribosomal protein bL21 family. As to quaternary structure, part of the 50S ribosomal subunit. Contacts protein L20.

In terms of biological role, this protein binds to 23S rRNA in the presence of protein L20. This is Large ribosomal subunit protein bL21 from Natranaerobius thermophilus (strain ATCC BAA-1301 / DSM 18059 / JW/NM-WN-LF).